A 394-amino-acid polypeptide reads, in one-letter code: NAD(P)H-quinone oxidoreductase subunit H (394 aa).

It belongs to the complex I 49 kDa subunit family. As to quaternary structure, NDH-1 can be composed of about 15 different subunits; different subcomplexes with different compositions have been identified which probably have different functions.

Its subcellular location is the cellular thylakoid membrane. It carries out the reaction a plastoquinone + NADH + (n+1) H(+)(in) = a plastoquinol + NAD(+) + n H(+)(out). It catalyses the reaction a plastoquinone + NADPH + (n+1) H(+)(in) = a plastoquinol + NADP(+) + n H(+)(out). NDH-1 shuttles electrons from an unknown electron donor, via FMN and iron-sulfur (Fe-S) centers, to quinones in the respiratory and/or the photosynthetic chain. The immediate electron acceptor for the enzyme in this species is believed to be plastoquinone. Couples the redox reaction to proton translocation, and thus conserves the redox energy in a proton gradient. Cyanobacterial NDH-1 also plays a role in inorganic carbon-concentration. The sequence is that of NAD(P)H-quinone oxidoreductase subunit H from Prochlorococcus marinus (strain MIT 9211).